A 274-amino-acid chain; its full sequence is Putative pyruvate, phosphate dikinase regulatory protein (274 aa).

Position 149–156 (glycine 149–threonine 156) interacts with ADP.

This sequence belongs to the pyruvate, phosphate/water dikinase regulatory protein family. PDRP subfamily.

The enzyme catalyses N(tele)-phospho-L-histidyl/L-threonyl-[pyruvate, phosphate dikinase] + ADP = N(tele)-phospho-L-histidyl/O-phospho-L-threonyl-[pyruvate, phosphate dikinase] + AMP + H(+). It catalyses the reaction N(tele)-phospho-L-histidyl/O-phospho-L-threonyl-[pyruvate, phosphate dikinase] + phosphate + H(+) = N(tele)-phospho-L-histidyl/L-threonyl-[pyruvate, phosphate dikinase] + diphosphate. Its function is as follows. Bifunctional serine/threonine kinase and phosphorylase involved in the regulation of the pyruvate, phosphate dikinase (PPDK) by catalyzing its phosphorylation/dephosphorylation. This is Putative pyruvate, phosphate dikinase regulatory protein from Rhizorhabdus wittichii (strain DSM 6014 / CCUG 31198 / JCM 15750 / NBRC 105917 / EY 4224 / RW1) (Sphingomonas wittichii).